The following is a 498-amino-acid chain: Beta-1,3-glucosyltransferase (498 aa).

The Cytoplasmic segment spans residues 1–6; the sequence is MRPPAC. The chain crosses the membrane as a helical; Signal-anchor for type II membrane protein span at residues 7–27; it reads WWLLAPPALLALLTCSLAFGL. Residues 28–498 are Lumenal-facing; sequence ASEDTKKEVK…ETQKGFREEL (471 aa). N336 carries an N-linked (GlcNAc...) asparagine glycan. The short motif at 495–498 is the Prevents secretion from ER element; the sequence is REEL.

Belongs to the glycosyltransferase 31 family. Widely expressed, with highest levels in testis and uterus.

The protein resides in the endoplasmic reticulum membrane. It participates in protein modification; protein glycosylation. In terms of biological role, O-glucosyltransferase that transfers glucose toward fucose with a beta-1,3 linkage. Specifically glucosylates O-linked fucosylglycan on TSP type-1 domains of proteins, thereby contributing to elongation of O-fucosylglycan. This Homo sapiens (Human) protein is Beta-1,3-glucosyltransferase.